We begin with the raw amino-acid sequence, 477 residues long: Chaperonin GroEL 2 (477 aa).

Residues 29 to 32 (TLGP), 86 to 90 (DGTTT), and G416 each bind ATP.

The protein belongs to the chaperonin (HSP60) family. In terms of assembly, forms a cylinder of 14 subunits composed of two heptameric rings stacked back-to-back. Interacts with the co-chaperonin GroES.

The protein localises to the cytoplasm. The enzyme catalyses ATP + H2O + a folded polypeptide = ADP + phosphate + an unfolded polypeptide.. Its function is as follows. Together with its co-chaperonin GroES, plays an essential role in assisting protein folding. The GroEL-GroES system forms a nano-cage that allows encapsulation of the non-native substrate proteins and provides a physical environment optimized to promote and accelerate protein folding. This Streptomyces lividans protein is Chaperonin GroEL 2.